The following is a 135-amino-acid chain: Lactoylglutathione lyase (135 aa).

The region spanning 2–126 (RLLHTMLRVG…DGYKIELIEA (125 aa)) is the VOC domain. H5 provides a ligand contact to Ni(2+). Position 9 (R9) interacts with substrate. Position 56 (E56) interacts with Ni(2+). Substrate-binding residues include N60 and H74. Ni(2+) contacts are provided by H74 and E122. E122 functions as the Proton donor/acceptor in the catalytic mechanism.

Belongs to the glyoxalase I family. As to quaternary structure, homodimer. The cofactor is Ni(2+).

The catalysed reaction is (R)-S-lactoylglutathione = methylglyoxal + glutathione. It participates in secondary metabolite metabolism; methylglyoxal degradation; (R)-lactate from methylglyoxal: step 1/2. Its function is as follows. Catalyzes the conversion of hemimercaptal, formed from methylglyoxal and glutathione, to S-lactoylglutathione. This chain is Lactoylglutathione lyase (gloA), found in Salmonella typhi.